The primary structure comprises 286 residues: 33 kDa chaperonin (286 aa).

2 cysteine pairs are disulfide-bonded: Cys225/Cys227 and Cys258/Cys261.

This sequence belongs to the HSP33 family. Under oxidizing conditions two disulfide bonds are formed involving the reactive cysteines. Under reducing conditions zinc is bound to the reactive cysteines and the protein is inactive.

It localises to the cytoplasm. Functionally, redox regulated molecular chaperone. Protects both thermally unfolding and oxidatively damaged proteins from irreversible aggregation. Plays an important role in the bacterial defense system toward oxidative stress. This Shewanella sp. (strain ANA-3) protein is 33 kDa chaperonin.